A 346-amino-acid polypeptide reads, in one-letter code: Serine/threonine-protein phosphatase PP1(4.8) (346 aa).

The segment at Q46 to T65 is disordered. Mn(2+)-binding residues include D102, H104, D130, and N162. H163 serves as the catalytic Proton donor. Residues H211 and H287 each coordinate Mn(2+).

The protein belongs to the PPP phosphatase family. PP-1 subfamily. It depends on Mn(2+) as a cofactor.

It catalyses the reaction O-phospho-L-seryl-[protein] + H2O = L-seryl-[protein] + phosphate. The enzyme catalyses O-phospho-L-threonyl-[protein] + H2O = L-threonyl-[protein] + phosphate. The sequence is that of Serine/threonine-protein phosphatase PP1(4.8) from Trypanosoma brucei brucei.